A 386-amino-acid polypeptide reads, in one-letter code: Manganese dependent endoglucanase Eg5A (386 aa).

Positions 1 to 17 (MLKYASIALALATLGVA) are cleaved as a signal peptide. The CBM1 domain maps to 18 to 53 (QQQQWGQCGGIGWTGATTCVAGSVCSVLNPYYSQCI). The Proton donor role is filled by Glu-209. Glu-319 functions as the Nucleophile in the catalytic mechanism. The N-linked (GlcNAc...) asparagine glycan is linked to Asn-324.

Belongs to the glycosyl hydrolase 5 (cellulase A) family. Mn(2+) is required as a cofactor.

The protein localises to the secreted. The enzyme catalyses Endohydrolysis of (1-&gt;4)-beta-D-glucosidic linkages in cellulose, lichenin and cereal beta-D-glucans.. In terms of biological role, secreted manganese dependent endoglucanase that acts by cleaving the beta-1,4-glucose linkage. Exhibits high activity toward carboxymethyl-cellulose (CMC), barley glucan, and glucomannan. Displays low activity on larminarin and xyloglucan but does not hydrolyze hemicellulose substrates such as birchwood xylan, arabinoxylan, and arabinan. The chain is Manganese dependent endoglucanase Eg5A from Phanerodontia chrysosporium (White-rot fungus).